An 83-amino-acid polypeptide reads, in one-letter code: Normal mucosa of esophagus-specific gene 1 protein (83 aa).

The protein belongs to the complex I NDUFA4 subunit family. In terms of tissue distribution, strongly expressed in vertebrae, brain, intestine and stomach.

The protein resides in the nucleus. The protein is Normal mucosa of esophagus-specific gene 1 protein (Nmes1) of Mus musculus (Mouse).